An 867-amino-acid chain; its full sequence is Replication origin-binding protein (867 aa).

Residues 1–39 (MNVATCTHQTHHAARAPGATSAPGAASGDPLGARRPIGD) are disordered. A compositionally biased stretch (low complexity) spans 15 to 28 (RAPGATSAPGAASG). Residues 86–251 (ASAPTARCVT…CSLRGEKNVH (166 aa)) enclose the Helicase ATP-binding domain. 99-106 (APMGSGKT) provides a ligand contact to ATP.

It belongs to the herpesviridae OriBP family. In terms of assembly, homodimer. Interacts with the major DNA-binding protein ICP8. Interacts with the helicase/primase component UL8 and the polymerase accessory protein UL42.

Its subcellular location is the host nucleus. Functions as a docking protein to recruit essential components of the viral replication machinery to viral DNA origins. In the presence of the major DNA-binding protein, opens dsDNA leading to a conformational change in the origin that facilitates DNA unwinding and subsequent replication. The sequence is that of Replication origin-binding protein from Human herpesvirus 2 (strain HG52) (HHV-2).